Consider the following 262-residue polypeptide: Adenosylcobinamide-GDP ribazoletransferase (262 aa).

8 consecutive transmembrane segments (helical) span residues 4 to 21, 37 to 57, 62 to 82, 112 to 132, 141 to 161, 181 to 201, 202 to 222, and 236 to 256; these read AWSG…IPIR, AFPL…FIFS, LSPL…AGGL, VGAF…LFVF, IFLI…LLIY, YDAH…CAIH, FSVW…VFVA, and DALG…IWLL.

The protein belongs to the CobS family. Requires Mg(2+) as cofactor.

Its subcellular location is the cell membrane. The catalysed reaction is alpha-ribazole + adenosylcob(III)inamide-GDP = adenosylcob(III)alamin + GMP + H(+). It carries out the reaction alpha-ribazole 5'-phosphate + adenosylcob(III)inamide-GDP = adenosylcob(III)alamin 5'-phosphate + GMP + H(+). It participates in cofactor biosynthesis; adenosylcobalamin biosynthesis; adenosylcobalamin from cob(II)yrinate a,c-diamide: step 7/7. Joins adenosylcobinamide-GDP and alpha-ribazole to generate adenosylcobalamin (Ado-cobalamin). Also synthesizes adenosylcobalamin 5'-phosphate from adenosylcobinamide-GDP and alpha-ribazole 5'-phosphate. This chain is Adenosylcobinamide-GDP ribazoletransferase, found in Geobacillus sp. (strain WCH70).